The primary structure comprises 146 residues: Hemoglobin subunit beta (146 aa).

An N-acetylvaline modification is found at Val1. A Globin domain is found at 2–146; it reads HLTPEEKSAV…VANALAHKYH (145 aa). Thr12 carries the post-translational modification Phosphothreonine. Ser44 is modified (phosphoserine). N6-acetyllysine is present on Lys59. Residue His63 coordinates heme b. Lys82 carries the post-translational modification N6-acetyllysine. Heme b is bound at residue His92. Cys93 carries the post-translational modification S-nitrosocysteine. Residue Lys144 is modified to N6-acetyllysine.

This sequence belongs to the globin family. As to quaternary structure, heterotetramer of two alpha chains and two beta chains. As to expression, red blood cells.

Its function is as follows. Involved in oxygen transport from the lung to the various peripheral tissues. The sequence is that of Hemoglobin subunit beta (HBB) from Hylobates lar (Lar gibbon).